The chain runs to 52 residues: Insulin (52 aa).

3 cysteine pairs are disulfide-bonded: cysteine 7–cysteine 38, cysteine 19–cysteine 51, and cysteine 37–cysteine 42.

The protein belongs to the insulin family. In terms of assembly, heterodimer of a B chain and an A chain linked by two disulfide bonds.

It localises to the secreted. Its function is as follows. Insulin decreases blood glucose concentration. It increases cell permeability to monosaccharides, amino acids and fatty acids. It accelerates glycolysis, the pentose phosphate cycle, and glycogen synthesis in liver. In Polypterus senegalus (Senegal bichir), this protein is Insulin (ins).